Here is a 66-residue protein sequence, read N- to C-terminus: Large ribosomal subunit protein bL31 (66 aa).

Residues Cys-16, Cys-18, Cys-36, and Cys-39 each coordinate Zn(2+).

This sequence belongs to the bacterial ribosomal protein bL31 family. Type A subfamily. As to quaternary structure, part of the 50S ribosomal subunit. Requires Zn(2+) as cofactor.

In terms of biological role, binds the 23S rRNA. The protein is Large ribosomal subunit protein bL31 of Leptospira biflexa serovar Patoc (strain Patoc 1 / Ames).